The following is a 102-amino-acid chain: Small ribosomal subunit protein uS10 (102 aa).

This sequence belongs to the universal ribosomal protein uS10 family. As to quaternary structure, part of the 30S ribosomal subunit.

Involved in the binding of tRNA to the ribosomes. This Methanosphaerula palustris (strain ATCC BAA-1556 / DSM 19958 / E1-9c) protein is Small ribosomal subunit protein uS10.